The sequence spans 336 residues: Holliday junction branch migration complex subunit RuvB (336 aa).

The interval 4–184 (SDRLISSQSI…FGIVQRLEYY (181 aa)) is large ATPase domain (RuvB-L). ATP is bound by residues isoleucine 23, arginine 24, glycine 65, lysine 68, threonine 69, threonine 70, 131-133 (EDY), arginine 174, tyrosine 184, and arginine 221. Threonine 69 provides a ligand contact to Mg(2+). The small ATPAse domain (RuvB-S) stretch occupies residues 185 to 255 (SVDSLTQIVA…MAQQALEMLE (71 aa)). The interval 258-336 (QHGFDLMDRK…HFGFSAIEQE (79 aa)) is head domain (RuvB-H). Residues arginine 313 and arginine 318 each coordinate DNA.

The protein belongs to the RuvB family. As to quaternary structure, homohexamer. Forms an RuvA(8)-RuvB(12)-Holliday junction (HJ) complex. HJ DNA is sandwiched between 2 RuvA tetramers; dsDNA enters through RuvA and exits via RuvB. An RuvB hexamer assembles on each DNA strand where it exits the tetramer. Each RuvB hexamer is contacted by two RuvA subunits (via domain III) on 2 adjacent RuvB subunits; this complex drives branch migration. In the full resolvosome a probable DNA-RuvA(4)-RuvB(12)-RuvC(2) complex forms which resolves the HJ.

It localises to the cytoplasm. It catalyses the reaction ATP + H2O = ADP + phosphate + H(+). In terms of biological role, the RuvA-RuvB-RuvC complex processes Holliday junction (HJ) DNA during genetic recombination and DNA repair, while the RuvA-RuvB complex plays an important role in the rescue of blocked DNA replication forks via replication fork reversal (RFR). RuvA specifically binds to HJ cruciform DNA, conferring on it an open structure. The RuvB hexamer acts as an ATP-dependent pump, pulling dsDNA into and through the RuvAB complex. RuvB forms 2 homohexamers on either side of HJ DNA bound by 1 or 2 RuvA tetramers; 4 subunits per hexamer contact DNA at a time. Coordinated motions by a converter formed by DNA-disengaged RuvB subunits stimulates ATP hydrolysis and nucleotide exchange. Immobilization of the converter enables RuvB to convert the ATP-contained energy into a lever motion, pulling 2 nucleotides of DNA out of the RuvA tetramer per ATP hydrolyzed, thus driving DNA branch migration. The RuvB motors rotate together with the DNA substrate, which together with the progressing nucleotide cycle form the mechanistic basis for DNA recombination by continuous HJ branch migration. Branch migration allows RuvC to scan DNA until it finds its consensus sequence, where it cleaves and resolves cruciform DNA. This is Holliday junction branch migration complex subunit RuvB from Legionella pneumophila (strain Lens).